We begin with the raw amino-acid sequence, 223 residues long: 2-C-methyl-D-erythritol 4-phosphate cytidylyltransferase (223 aa).

This sequence belongs to the IspD/TarI cytidylyltransferase family. IspD subfamily.

It carries out the reaction 2-C-methyl-D-erythritol 4-phosphate + CTP + H(+) = 4-CDP-2-C-methyl-D-erythritol + diphosphate. It participates in isoprenoid biosynthesis; isopentenyl diphosphate biosynthesis via DXP pathway; isopentenyl diphosphate from 1-deoxy-D-xylulose 5-phosphate: step 2/6. Functionally, catalyzes the formation of 4-diphosphocytidyl-2-C-methyl-D-erythritol from CTP and 2-C-methyl-D-erythritol 4-phosphate (MEP). The polypeptide is 2-C-methyl-D-erythritol 4-phosphate cytidylyltransferase (Prochlorococcus marinus (strain MIT 9301)).